The sequence spans 116 residues: Cation channel sperm-associated auxiliary subunit TMEM262 (116 aa).

Residues 1 to 16 are Cytoplasmic-facing; the sequence is MRWRDRIAVLCFPPGL. Residues 17-38 traverse the membrane as a helical segment; that stretch reads MLTVAALILFFIHMGVFASDVH. The Extracellular portion of the chain corresponds to 39–51; that stretch reads NFCVIHNYDHMSF. A helical transmembrane segment spans residues 52–72; the sequence is RYTVVLIFSQVISIGWAAMGS. Residues 73 to 84 are Cytoplasmic-facing; that stretch reads LYAEMTGDKFLR. The chain crosses the membrane as a helical span at residues 85–107; that stretch reads CFALTILILNGAMFFNRLCLEFL. Residues 108–116 lie on the Extracellular side of the membrane; the sequence is AINYREERH.

In terms of assembly, component of the CatSper complex or CatSpermasome composed of the core pore-forming members CATSPER1, CATSPER2, CATSPER3 and CATSPER4 as well as auxiliary members CATSPERB, CATSPERG, CATSPERD, CATSPERE, CATSPERZ, C2CD6/CATSPERT, SLCO6C1, TMEM249, TMEM262 and EFCAB9. HSPA1 may be an additional auxiliary complex member. The core complex members CATSPER1, CATSPER2, CATSPER3 and CATSPER4 form a heterotetrameric channel. The auxiliary CATSPERB, CATSPERG2, CATSPERD and CATSPERE subunits form a pavilion-like structure over the pore which stabilizes the complex through interactions with CATSPER4, CATSPER3, CATSPER1 and CATSPER2 respectively. SLCO6C1 interacts with CATSPERE and TMEM262/CATSPERH interacts with CATSPERB, further stabilizing the complex. C2CD6/CATSPERT interacts at least with CATSPERD and is required for targeting the CatSper complex in the flagellar membrane.

The protein localises to the cell projection. It is found in the cilium. The protein resides in the flagellum membrane. Its function is as follows. Auxiliary component of the CatSper complex, a complex involved in sperm cell hyperactivation. The polypeptide is Cation channel sperm-associated auxiliary subunit TMEM262 (Mus musculus (Mouse)).